Consider the following 116-residue polypeptide: MASTDSVYRPTPTPDHDTTVVVVVFVSLGCVMFLAFLAFVIWFLIKKRSRKHRERSEAVRVDEHFKMKEAIVEGPNGQKSVVLSVEDDVKIEDAIKREEKDLKKDGGVGSSVVSRS.

The Extracellular portion of the chain corresponds to 1–24 (MASTDSVYRPTPTPDHDTTVVVVV). Residues 25-45 (FVSLGCVMFLAFLAFVIWFLI) traverse the membrane as a helical segment. Topologically, residues 46-116 (KKRSRKHRER…GVGSSVVSRS (71 aa)) are cytoplasmic.

Interacts with CESA7/IRX3, a subunit of the secondary cell wall (SCW)-related cellulose synthase complex. Expressed preferentially in differentiating vessel elements in seedlings.

The protein localises to the cell membrane. It is found in the secreted. It localises to the cell wall. Its function is as follows. Involved in the secondary cell wall (SCW) formation of vessel elements (e.g. protoxylem and metaxylem), thus promoting tracheary element (TE) differentiation. In Arabidopsis thaliana (Mouse-ear cress), this protein is Protein TRACHEARY ELEMENT DIFFERENTIATION-RELATED 6.